The following is an 88-amino-acid chain: MGSLSPWHWVVLVVVVVLLFGAKKLPDAARSLGKSMRIFKSELREMQTENQAQASALETPMQNPTVVQSQRVVPPWSTEQDHTEARPA.

A helical membrane pass occupies residues 1–21; the sequence is MGSLSPWHWVVLVVVVVLLFG. Residues 49 to 71 are compositionally biased toward polar residues; the sequence is ENQAQASALETPMQNPTVVQSQR. The disordered stretch occupies residues 49–88; it reads ENQAQASALETPMQNPTVVQSQRVVPPWSTEQDHTEARPA. A compositionally biased stretch (basic and acidic residues) spans 79–88; it reads EQDHTEARPA.

The protein belongs to the TatA/E family. In terms of assembly, the Tat system comprises two distinct complexes: a TatABC complex, containing multiple copies of TatA, TatB and TatC subunits, and a separate TatA complex, containing only TatA subunits. Substrates initially bind to the TatABC complex, which probably triggers association of the separate TatA complex to form the active translocon.

It localises to the cell membrane. Functionally, part of the twin-arginine translocation (Tat) system that transports large folded proteins containing a characteristic twin-arginine motif in their signal peptide across membranes. TatA could form the protein-conducting channel of the Tat system. This chain is Sec-independent protein translocase protein TatA, found in Mycobacterium leprae (strain TN).